A 157-amino-acid polypeptide reads, in one-letter code: uncharacterized protein (157 aa).

A signal peptide spans 1–17 (MSMKTKAAFHLVLFGLA). Cys18 carries N-palmitoyl cysteine lipidation. Cys18 carries S-diacylglycerol cysteine lipidation. The next 3 helical transmembrane spans lie at 42–64 (MVFD…YLYL), 98–120 (ASYI…YPLF), and 124–146 (IPFF…YVIS).

The protein resides in the cell membrane. This is an uncharacterized protein from Bacillus subtilis (strain 168).